Consider the following 186-residue polypeptide: Probable chorismate pyruvate-lyase (186 aa).

Substrate-binding residues include R80, L118, and E170.

The protein belongs to the UbiC family.

The protein resides in the cytoplasm. The enzyme catalyses chorismate = 4-hydroxybenzoate + pyruvate. It participates in cofactor biosynthesis; ubiquinone biosynthesis. Functionally, removes the pyruvyl group from chorismate, with concomitant aromatization of the ring, to provide 4-hydroxybenzoate (4HB) for the ubiquinone pathway. This is Probable chorismate pyruvate-lyase from Pseudomonas savastanoi pv. phaseolicola (strain 1448A / Race 6) (Pseudomonas syringae pv. phaseolicola (strain 1448A / Race 6)).